The following is a 420-amino-acid chain: Glutamate dehydrogenase (420 aa).

Lysine 105 is an active-site residue. 220–226 (GYGNAGY) is an NAD(+) binding site.

The protein belongs to the Glu/Leu/Phe/Val dehydrogenases family. In terms of assembly, homohexamer.

It is found in the cytoplasm. It carries out the reaction L-glutamate + NAD(+) + H2O = 2-oxoglutarate + NH4(+) + NADH + H(+). The enzyme catalyses L-glutamate + NADP(+) + H2O = 2-oxoglutarate + NH4(+) + NADPH + H(+). The polypeptide is Glutamate dehydrogenase (gdhA) (Pyrococcus furiosus (strain ATCC 43587 / DSM 3638 / JCM 8422 / Vc1)).